A 105-amino-acid chain; its full sequence is Thioredoxin (105 aa).

The Thioredoxin domain occupies 1–105 (MVNNVTDSSF…SLLDWINKSI (105 aa)). Residues C30 and C33 are joined by a disulfide bond.

The protein belongs to the thioredoxin family.

In terms of biological role, component of the thioredoxin-thioredoxin reductase system. Participates in various redox reactions through the reversible oxidation of its active center dithiol to a disulfide and catalyzes dithiol-disulfide exchange reactions. In Rickettsia prowazekii (strain Madrid E), this protein is Thioredoxin (trxA).